The primary structure comprises 237 residues: uncharacterized protein (237 aa).

Residues M1–G28 form the signal peptide. Residues N52–Q96 are disordered. Over residues T63–D75 the composition is skewed to polar residues.

This is an uncharacterized protein from Treponema pallidum (strain Nichols).